The sequence spans 20 residues: Unknown protein NF015 from 2D-PAGE (20 aa).

Residues 1–20 (TPQIQKPAPQFSKTALLPDE) form a disordered region.

This is Unknown protein NF015 from 2D-PAGE from Naegleria fowleri (Brain eating amoeba).